We begin with the raw amino-acid sequence, 155 residues long: Small ribosomal subunit protein uS17 (155 aa).

N-acetylalanine is present on A2.

It belongs to the universal ribosomal protein uS17 family.

The sequence is that of Small ribosomal subunit protein uS17 from Drosophila yakuba (Fruit fly).